Consider the following 232-residue polypeptide: Phosphatidylserine decarboxylase proenzyme (232 aa).

The Schiff-base intermediate with substrate; via pyruvic acid role is filled by S190. S190 is modified (pyruvic acid (Ser); by autocatalysis).

Belongs to the phosphatidylserine decarboxylase family. PSD-A subfamily. In terms of assembly, heterodimer of a large membrane-associated beta subunit and a small pyruvoyl-containing alpha subunit. Pyruvate serves as cofactor. In terms of processing, is synthesized initially as an inactive proenzyme. Formation of the active enzyme involves a self-maturation process in which the active site pyruvoyl group is generated from an internal serine residue via an autocatalytic post-translational modification. Two non-identical subunits are generated from the proenzyme in this reaction, and the pyruvate is formed at the N-terminus of the alpha chain, which is derived from the carboxyl end of the proenzyme. The post-translation cleavage follows an unusual pathway, termed non-hydrolytic serinolysis, in which the side chain hydroxyl group of the serine supplies its oxygen atom to form the C-terminus of the beta chain, while the remainder of the serine residue undergoes an oxidative deamination to produce ammonia and the pyruvoyl prosthetic group on the alpha chain.

It localises to the cell membrane. The enzyme catalyses a 1,2-diacyl-sn-glycero-3-phospho-L-serine + H(+) = a 1,2-diacyl-sn-glycero-3-phosphoethanolamine + CO2. It functions in the pathway phospholipid metabolism; phosphatidylethanolamine biosynthesis; phosphatidylethanolamine from CDP-diacylglycerol: step 2/2. In terms of biological role, catalyzes the formation of phosphatidylethanolamine (PtdEtn) from phosphatidylserine (PtdSer). In Beijerinckia indica subsp. indica (strain ATCC 9039 / DSM 1715 / NCIMB 8712), this protein is Phosphatidylserine decarboxylase proenzyme.